The primary structure comprises 151 residues: UPF0756 membrane protein Moth_0120 (151 aa).

4 helical membrane-spanning segments follow: residues 6–26, 52–72, 75–95, and 111–131; these read VILI…IAAA, AGLI…RVAP, MLQS…IIAT, and MMIG…GIPV.

It belongs to the UPF0756 family.

It is found in the cell membrane. This chain is UPF0756 membrane protein Moth_0120, found in Moorella thermoacetica (strain ATCC 39073 / JCM 9320).